A 402-amino-acid polypeptide reads, in one-letter code: Multidrug resistance protein MdtG (402 aa).

The next 11 membrane-spanning stretches (helical) occupy residues 14 to 34 (LYIV…IMPF), 52 to 72 (LWTG…APFW), 90 to 110 (LGMA…QLLI), 113 to 133 (ALLG…ATQV), 149 to 169 (AVSG…LYGL), 171 to 191 (PVFF…LFFV), 219 to 239 (VICL…VTPI), 254 to 274 (LAFI…ISAP), 288 to 308 (VLIF…LVSN), 318 to 338 (LLGA…LYNI), and 376 to 396 (AVFY…WISF).

The protein belongs to the major facilitator superfamily. DHA1 family. MdtG (TC 2.A.1.2.20) subfamily.

Its subcellular location is the cell inner membrane. The chain is Multidrug resistance protein MdtG from Proteus mirabilis (strain HI4320).